The following is a 78-amino-acid chain: Large ribosomal subunit protein bL28 (78 aa).

Residues 1 to 20 (MSRVCQVTGKGPVTGNNISH) are disordered.

This sequence belongs to the bacterial ribosomal protein bL28 family.

This Pseudomonas fluorescens (strain ATCC BAA-477 / NRRL B-23932 / Pf-5) protein is Large ribosomal subunit protein bL28.